We begin with the raw amino-acid sequence, 105 residues long: Large ribosomal subunit protein eL30 (105 aa).

It belongs to the eukaryotic ribosomal protein eL30 family.

The sequence is that of Large ribosomal subunit protein eL30 (RPL30) from Trypanosoma brucei brucei.